Here is a 448-residue protein sequence, read N- to C-terminus: Methionine aminopeptidase 2 (448 aa).

Residues 1 to 94 form a disordered region; the sequence is MAAQVTDALK…PRVLLSNLFP (94 aa). Over residues 37–50 the composition is skewed to acidic residues; sequence AEAEDSDDDDEEPV. Positions 61–74 are enriched in basic residues; it reads KKKRKRKKKPKKKA. His201 is a substrate binding site. The a divalent metal cation site is built by Asp221, Asp232, and His301. His309 serves as a coordination point for substrate. A divalent metal cation contacts are provided by Glu334 and Glu429.

It belongs to the peptidase M24A family. Methionine aminopeptidase eukaryotic type 2 subfamily. Requires Co(2+) as cofactor. The cofactor is Zn(2+). Mn(2+) is required as a cofactor. Fe(2+) serves as cofactor.

The protein resides in the cytoplasm. The catalysed reaction is Release of N-terminal amino acids, preferentially methionine, from peptides and arylamides.. Its function is as follows. Cotranslationally removes the N-terminal methionine from nascent proteins. The N-terminal methionine is often cleaved when the second residue in the primary sequence is small and uncharged (Met-Ala-, Cys, Gly, Pro, Ser, Thr, or Val). The sequence is that of Methionine aminopeptidase 2 from Botryotinia fuckeliana (strain B05.10) (Noble rot fungus).